A 276-amino-acid chain; its full sequence is Extracellular metalloprotease 1 (276 aa).

Positions 1-18 (MRVSVPVLALAFGSLAAA) are cleaved as a signal peptide. Residue histidine 191 coordinates Zn(2+). The active site involves glutamate 192. Histidine 195 is a binding site for Zn(2+). The segment at 211–233 (GDYVSDTPPQRSPSSGCPVGRDS) is disordered. A disulfide bridge connects residues cysteine 227 and cysteine 253.

Belongs to the peptidase M43B family.

Its subcellular location is the secreted. In terms of biological role, secreted metalloproteinase that allows assimilation of proteinaceous substrates. Pays a pivotal role as a pathogenicity determinant during infections and contributes to the ability of the pathogen to persist within the mammalian host. Digests an immunodominant cell surface antigen (SOWgp) and prevents host recognition of endospores during the phase of development when these fungal cells are most vulnerable to phagocytic cell defenses. This chain is Extracellular metalloprotease 1 (MEP1), found in Coccidioides posadasii (strain C735) (Valley fever fungus).